The chain runs to 391 residues: Homocysteine-responsive endoplasmic reticulum-resident ubiquitin-like domain member 1 protein (391 aa).

Position 1 is an N-acetylmethionine (M1). Residues 1-263 (MESETEPEPV…VEEDDEINRD (263 aa)) lie on the Cytoplasmic side of the membrane. A Ubiquitin-like domain is found at 10 to 72 (VTLLVKSPNQ…LLDHQCLRDL (63 aa)). Residues 100 to 126 (KVAESTEEPAGSNRGQYPEDSSSDGLR) form a disordered region. Over residues 112–124 (NRGQYPEDSSSDG) the composition is skewed to polar residues. An interaction with UBQLN1 region spans residues 115–200 (QYPEDSSSDG…ASGAFVPPPS (86 aa)). Residue S135 is modified to Phosphoserine. The helical transmembrane segment at 264-284 (WLDWTYSAATFSVFLSILYFY) threads the bilayer. At 285-289 (SSLSR) the chain is on the lumenal side. Residues 290–310 (FLMVMGATVVMYLHHVGWFPF) traverse the membrane as a helical segment. Topologically, residues 311 to 391 (RPRPVQNFPN…LPEGPPAIAN (81 aa)) are cytoplasmic. A disordered region spans residues 318-359 (FPNDGPPPDIVNQDPNNNLQEGTDPETEDPNHVPPDRGVLDG). A compositionally biased stretch (basic and acidic residues) spans 346–357 (DPNHVPPDRGVL).

Interacts with PSEN1 and PSEN2. Interacts with UBXN6. Interacts with UBQLN1, UBQLN2 and UBQLN4. Component of the HRD1 complex, which comprises at least SYNV1/HRD1, FAM8A1, HERPUD1/HERP, OS9, SEL1L and UBE2J1. FAM8A1 binding to SYNV1 may promote recruitment of HERPUD1 to the HRD1 complex.

It is found in the endoplasmic reticulum membrane. Its function is as follows. Component of the endoplasmic reticulum quality control (ERQC) system also called ER-associated degradation (ERAD) involved in ubiquitin-dependent degradation of misfolded endoplasmic reticulum proteins. Binds to ubiquilins and this interaction is required for efficient degradation of CD3D via the ERAD pathway. The protein is Homocysteine-responsive endoplasmic reticulum-resident ubiquitin-like domain member 1 protein (HERPUD1) of Pongo abelii (Sumatran orangutan).